Consider the following 78-residue polypeptide: MLVLLHAVFITVLTLLLLGRLQLLERLLLNHSFNLKTVADFNILYRSLAETRLLKVVLRLIFLVLLGFCCYRLLVILM.

The N-terminal stretch at 1–23 is a signal peptide; the sequence is MLVLLHAVFITVLTLLLLGRLQL. Residues 24–57 lie on the Lumenal side of the membrane; sequence LERLLLNHSFNLKTVADFNILYRSLAETRLLKVV. An interaction with PPP1CC/PP1-gamma region spans residues 54 to 65; it reads LKVVLRLIFLVL. Residues 58 to 78 traverse the membrane as a helical segment; it reads LRLIFLVLLGFCCYRLLVILM.

Belongs to the coronaviruses ns7/ns7a protein family. Interacts with serine/threonine-protein phosphatase PPP1CC/PP1-gamma; this interaction; this interaction probably promotes EIF2S1/eIF-2alpha dephosphorylation.

The protein localises to the host membrane. Functionally, inhibits the integrated stress response (ISR) in the infected cell by promoting EIF2S1/eIF-2alpha dephosphorylation. Acts as a functional homolog of host PPP1R15A/GADD34 to recruit PP1 phosphatase and dephosphorylate host EIF2S1/eIF-2alpha. May function in the formation of membrane-bound replication complexes or in the assembly of the virus. This chain is Non-structural protein 7, found in Sus scrofa (Pig).